Consider the following 146-residue polypeptide: Cyanate hydratase (146 aa).

Active-site residues include R87, E90, and S113.

This sequence belongs to the cyanase family.

It carries out the reaction cyanate + hydrogencarbonate + 3 H(+) = NH4(+) + 2 CO2. In terms of biological role, catalyzes the reaction of cyanate with bicarbonate to produce ammonia and carbon dioxide. The chain is Cyanate hydratase from Marinomonas sp. (strain MWYL1).